Reading from the N-terminus, the 390-residue chain is Serpin B4 (390 aa).

N-acetylmethionine is present on methionine 1.

Belongs to the serpin family. Ov-serpin subfamily. As to expression, squamous cells.

It is found in the cytoplasm. May act as a protease inhibitor to modulate the host immune response against tumor cells. This chain is Serpin B4 (SERPINB4), found in Homo sapiens (Human).